Consider the following 268-residue polypeptide: Tetraspanin-5 (268 aa).

The Cytoplasmic portion of the chain corresponds to 1–17 (MSGKHYKGPEVSCCIKY). A helical membrane pass occupies residues 18 to 38 (FIFGFNVIFWFLGIAFLGIGL). Topologically, residues 39-61 (WAWNEKGVLSNISSITDLGGFDP) are extracellular. Asn-49 carries an N-linked (GlcNAc...) asparagine glycan. The chain crosses the membrane as a helical span at residues 62–82 (VWLFLVVGGVMFILGFAGCIG). Over 83–92 (ALRENTFLLK) the chain is Cytoplasmic. The helical transmembrane segment at 93–113 (FFSVFLGIIFFLELTAGVLAF) threads the bilayer. Topologically, residues 114 to 232 (VFKDWIKDQL…PQFEKWLQDN (119 aa)) are extracellular. Cystine bridges form between Cys-153/Cys-221, Cys-154/Cys-186, Cys-170/Cys-180, and Cys-187/Cys-200. N-linked (GlcNAc...) asparagine glycosylation is found at Asn-169 and Asn-174. A glycan (N-linked (GlcNAc...) asparagine) is linked at Asn-232. The chain crosses the membrane as a helical span at residues 233 to 253 (LTIVAGIFIGIALLQIFGICL). At 254-268 (AQNLVSDIEAVRASW) the chain is on the cytoplasmic side.

Belongs to the tetraspanin (TM4SF) family. In terms of assembly, interacts with ADAM10; the interaction influences ADAM10 substrate specificity, endocytosis and turnover. In terms of processing, palmitoylated.

It localises to the cell membrane. Functionally, part of TspanC8 subgroup, composed of 6 members that interact with the transmembrane metalloprotease ADAM10. This interaction is required for ADAM10 exit from the endoplasmic reticulum and for enzymatic maturation and trafficking to the cell surface as well as substrate specificity. Different TspanC8/ADAM10 complexes have distinct substrates. Promotes ADAM10-mediated cleavage of CD44. Seems to regulate VE-cadherin expression in endothelial cells probably through interaction with ADAM10, promoting leukocyte transmigration. In Bos taurus (Bovine), this protein is Tetraspanin-5 (TSPAN5).